The sequence spans 173 residues: Crossover junction endodeoxyribonuclease RuvC (173 aa).

Active-site residues include D8, E69, and D141. Residues D8, E69, and D141 each contribute to the Mg(2+) site.

The protein belongs to the RuvC family. In terms of assembly, homodimer which binds Holliday junction (HJ) DNA. The HJ becomes 2-fold symmetrical on binding to RuvC with unstacked arms; it has a different conformation from HJ DNA in complex with RuvA. In the full resolvosome a probable DNA-RuvA(4)-RuvB(12)-RuvC(2) complex forms which resolves the HJ. The cofactor is Mg(2+).

The protein localises to the cytoplasm. The catalysed reaction is Endonucleolytic cleavage at a junction such as a reciprocal single-stranded crossover between two homologous DNA duplexes (Holliday junction).. The RuvA-RuvB-RuvC complex processes Holliday junction (HJ) DNA during genetic recombination and DNA repair. Endonuclease that resolves HJ intermediates. Cleaves cruciform DNA by making single-stranded nicks across the HJ at symmetrical positions within the homologous arms, yielding a 5'-phosphate and a 3'-hydroxyl group; requires a central core of homology in the junction. The consensus cleavage sequence is 5'-(A/T)TT(C/G)-3'. Cleavage occurs on the 3'-side of the TT dinucleotide at the point of strand exchange. HJ branch migration catalyzed by RuvA-RuvB allows RuvC to scan DNA until it finds its consensus sequence, where it cleaves and resolves the cruciform DNA. This is Crossover junction endodeoxyribonuclease RuvC from Xylella fastidiosa (strain 9a5c).